A 292-amino-acid polypeptide reads, in one-letter code: Syntenin-2 (292 aa).

PDZ domains lie at 108–187 (EIHL…IRDR) and 192–267 (TVTM…IPTV).

As to quaternary structure, monomer and homodimer. Interacts with SDCBP. Interacts with TM4SF1.

It is found in the cytoplasm. The protein resides in the nucleus. Its subcellular location is the nucleolus. It localises to the nucleoplasm. The protein localises to the cell membrane. It is found in the nucleus speckle. Functionally, binds phosphatidylinositol 4,5-bisphosphate (PIP2). May play a role in the organization of nuclear PIP2, cell division and cell survival. In Mus musculus (Mouse), this protein is Syntenin-2 (Sdcbp2).